Here is a 347-residue protein sequence, read N- to C-terminus: MNPMTFTVLLATIMSGTSIVLLSSHWFMTWLGFEMNMMAIIPVLMKKYNPRSMEAATKYFLTQATASMILVLAIIINTMYSGQWTIMNMENQLASILITLALVMKLGLAPFHFWVPEVTQGVSLDSGLILLTWQKIAPLSLLYQIYPSLNTNLLLTMSLLSIMIGGWGGLNQTQLRKIMAYSSIAHMGWMIAIMTYNPNLSLLNLIIYITMTSSMFMLLIINSTTSTLSLSLTWNKTPIVTTMMLISLLSLGGLPPLTGFMPKWMIIQELTKNNSLILPTLMSILALLNLFFYMRLAYSTTLTMFPTTNNTKLSWQFKNTNILPTTAPLISISTMILPLTPLLITLN.

11 helical membrane-spanning segments follow: residues 3–23 (PMTFTVLLATIMSGTSIVLLS), 25–45 (HWFMTWLGFEMNMMAIIPVLM), 59–79 (YFLTQATASMILVLAIIINTM), 96–116 (ILITLALVMKLGLAPFHFWVP), 127–147 (GLILLTWQKIAPLSLLYQIYP), 149–169 (LNTNLLLTMSLLSIMIGGWGG), 178–198 (IMAYSSIAHMGWMIAIMTYNP), 201–221 (SLLNLIIYITMTSSMFMLLII), 239–259 (IVTTMMLISLLSLGGLPPLTG), 274–294 (NSLILPTLMSILALLNLFFYM), and 326–346 (TAPLISISTMILPLTPLLITL).

This sequence belongs to the complex I subunit 2 family. Core subunit of respiratory chain NADH dehydrogenase (Complex I) which is composed of 45 different subunits. Interacts with TMEM242.

The protein resides in the mitochondrion inner membrane. The catalysed reaction is a ubiquinone + NADH + 5 H(+)(in) = a ubiquinol + NAD(+) + 4 H(+)(out). Core subunit of the mitochondrial membrane respiratory chain NADH dehydrogenase (Complex I) which catalyzes electron transfer from NADH through the respiratory chain, using ubiquinone as an electron acceptor. Essential for the catalytic activity and assembly of complex I. The sequence is that of NADH-ubiquinone oxidoreductase chain 2 from Sylvisorex ollula (Greater forest shrew).